The chain runs to 857 residues: Inactive rhomboid protein 1 (857 aa).

The Cytoplasmic segment spans residues 1 to 413; sequence MAELRRDSTS…HRPFFTYWIT (413 aa). The disordered stretch occupies residues 283–307; that stretch reads FESPSDSTMKDVDSKQLDESELTGS. A compositionally biased stretch (basic and acidic residues) spans 290 to 300; that stretch reads TMKDVDSKQLD. The chain crosses the membrane as a helical span at residues 414–434; it reads FVHILITILAVCIYGIAPVGF. The Lumenal portion of the chain corresponds to 435 to 661; the sequence is SQHETVDSVL…PDQFYRLWLS (227 aa). An N-linked (GlcNAc...) asparagine glycan is attached at asparagine 585. A helical membrane pass occupies residues 662-682; the sequence is LFLHAGILHCLVSVCFQMTIL. Residues 683-693 are Cytoplasmic-facing; that stretch reads RDLEKLAGWLR. Residues 694 to 714 form a helical membrane-spanning segment; sequence ISIIYILSGITGNLASAIFLP. Over 715 to 716 the chain is Lumenal; sequence YR. Residues 717 to 737 traverse the membrane as a helical segment; the sequence is AEVGPAGSQFGILACLFVELI. The Cytoplasmic portion of the chain corresponds to 738 to 748; the sequence is QSWQILAQPWR. The chain crosses the membrane as a helical span at residues 749–769; sequence AFTKLLCVVLFLFAFGLLPWI. At 770 to 774 the chain is on the lumenal side; sequence DNFAH. Residues 775 to 795 form a helical membrane-spanning segment; it reads ISGFISGFFLSFAFLPYISFG. Over 796–805 the chain is Cytoplasmic; that stretch reads RLDMYRKRCQ. The helical transmembrane segment at 806-826 threads the bilayer; that stretch reads IIIFLVVFLGLFAGLVVLFYV. Over 827-857 the chain is Lumenal; it reads HPIKCEWCELLTCIPFTDKFCEKYDLNAHLH.

It belongs to the peptidase S54 family.

The protein localises to the endoplasmic reticulum membrane. The protein resides in the golgi apparatus membrane. In terms of biological role, regulates ADAM17 protease, a sheddase of the epidermal growth factor (EGF) receptor ligands and TNF, thereby plays a role in sleep, cell survival, proliferation, migration and inflammation. Does not exhibit any protease activity on its own. The protein is Inactive rhomboid protein 1 (rhbdf1) of Danio rerio (Zebrafish).